The following is a 260-amino-acid chain: Winged helix repair factor 1 (260 aa).

Winged helix domain stretches follow at residues 38–110, 126–185, and 186–260; these read FTED…MVVM, SRAT…LAVP, and GAGR…ISET.

It belongs to the STK19 family. Monomer in solution. Homodimer; when bound to DNA. Component of a transcription-coupled nucleotide excision repair (TC-NER) complex which assembles and interacts with the multiprotein RNA polymerase II complex when it stalls at DNA lesions.

The protein localises to the nucleus. Its function is as follows. DNA-binding protein which is required for efficient transcription-coupled nucleotide excision repair (TC-NER). Acts as part of a TC-NER complex which assembles and interacts with RNA polymerase II (RNAPII) when it stalls at DNA lesions. The polypeptide is Winged helix repair factor 1 (Xenopus laevis (African clawed frog)).